A 221-amino-acid chain; its full sequence is N-(5'-phosphoribosyl)anthranilate isomerase (221 aa).

Belongs to the TrpF family.

It carries out the reaction N-(5-phospho-beta-D-ribosyl)anthranilate = 1-(2-carboxyphenylamino)-1-deoxy-D-ribulose 5-phosphate. The protein operates within amino-acid biosynthesis; L-tryptophan biosynthesis; L-tryptophan from chorismate: step 3/5. This Chlorobaculum parvum (strain DSM 263 / NCIMB 8327) (Chlorobium vibrioforme subsp. thiosulfatophilum) protein is N-(5'-phosphoribosyl)anthranilate isomerase.